The primary structure comprises 356 residues: Chorismate synthase (356 aa).

The NADP(+) site is built by Arg-48 and Arg-54. Residues 125 to 127 (RSS), 237 to 238 (NA), Gly-282, 297 to 301 (KPTSS), and Arg-323 contribute to the FMN site.

This sequence belongs to the chorismate synthase family. Homotetramer. The cofactor is FMNH2.

The enzyme catalyses 5-O-(1-carboxyvinyl)-3-phosphoshikimate = chorismate + phosphate. The protein operates within metabolic intermediate biosynthesis; chorismate biosynthesis; chorismate from D-erythrose 4-phosphate and phosphoenolpyruvate: step 7/7. Catalyzes the anti-1,4-elimination of the C-3 phosphate and the C-6 proR hydrogen from 5-enolpyruvylshikimate-3-phosphate (EPSP) to yield chorismate, which is the branch point compound that serves as the starting substrate for the three terminal pathways of aromatic amino acid biosynthesis. This reaction introduces a second double bond into the aromatic ring system. The sequence is that of Chorismate synthase from Rhizorhabdus wittichii (strain DSM 6014 / CCUG 31198 / JCM 15750 / NBRC 105917 / EY 4224 / RW1) (Sphingomonas wittichii).